Consider the following 242-residue polypeptide: Ribose-5-phosphate isomerase A (242 aa).

Substrate contacts are provided by residues 39-42, 95-98, and 108-111; these read SGST, DGAD, and KGGG. Glu-117 acts as the Proton acceptor in catalysis. Lys-135 is a binding site for substrate.

This sequence belongs to the ribose 5-phosphate isomerase family. In terms of assembly, homodimer.

It catalyses the reaction aldehydo-D-ribose 5-phosphate = D-ribulose 5-phosphate. The protein operates within carbohydrate degradation; pentose phosphate pathway; D-ribose 5-phosphate from D-ribulose 5-phosphate (non-oxidative stage): step 1/1. Functionally, catalyzes the reversible conversion of ribose-5-phosphate to ribulose 5-phosphate. This Chlamydia trachomatis serovar D (strain ATCC VR-885 / DSM 19411 / UW-3/Cx) protein is Ribose-5-phosphate isomerase A.